A 307-amino-acid chain; its full sequence is 4-hydroxybenzoate geranyltransferase 1 (307 aa).

The next 8 membrane-spanning stretches (helical) occupy residues 38–58 (PIGS…AADL), 62–82 (PKML…GCTI), 120–140 (LFIG…LAIV), 154–174 (ITYW…LLGS), 179–199 (GSVV…WTLV), 230–250 (MWIS…GLIL), 252–272 (IGLP…WQIF), and 286–306 (FVSN…GRLF).

It belongs to the UbiA prenyltransferase family. Mg(2+) serves as cofactor. Expressed only in roots.

The protein localises to the endoplasmic reticulum membrane. It carries out the reaction 4-hydroxybenzoate + (2E)-geranyl diphosphate = 3-geranyl-4-hydroxybenzoate + diphosphate. Prenyltransferase involved in the biosynthesis of shikonin, a naphthoquinone secondary metabolite. Could accept only geranyl diphosphate and not dimethylallyl diphosphate, farnesyl diphosphate, or geranylgeranyl diphosphate as substrate. The chain is 4-hydroxybenzoate geranyltransferase 1 (PGT-1) from Lithospermum erythrorhizon (Purple gromwell).